The primary structure comprises 292 residues: Pantothenate synthetase (292 aa).

30–37 (MGALHEGH) is an ATP binding site. His37 acts as the Proton donor in catalysis. (R)-pantoate is bound at residue Gln61. Gln61 lines the beta-alanine pocket. 147–150 (GEKD) is an ATP binding site. Gln153 lines the (R)-pantoate pocket. Residue 184-187 (VSSR) participates in ATP binding.

Belongs to the pantothenate synthetase family. As to quaternary structure, homodimer.

The protein resides in the cytoplasm. It carries out the reaction (R)-pantoate + beta-alanine + ATP = (R)-pantothenate + AMP + diphosphate + H(+). The protein operates within cofactor biosynthesis; (R)-pantothenate biosynthesis; (R)-pantothenate from (R)-pantoate and beta-alanine: step 1/1. Catalyzes the condensation of pantoate with beta-alanine in an ATP-dependent reaction via a pantoyl-adenylate intermediate. The protein is Pantothenate synthetase of Chlorobium phaeovibrioides (strain DSM 265 / 1930) (Prosthecochloris vibrioformis (strain DSM 265)).